A 123-amino-acid chain; its full sequence is Small ribosomal subunit protein uS12c (123 aa).

It belongs to the universal ribosomal protein uS12 family. As to quaternary structure, part of the 30S ribosomal subunit.

It is found in the plastid. It localises to the chloroplast. With S4 and S5 plays an important role in translational accuracy. Located at the interface of the 30S and 50S subunits. This Chlorokybus atmophyticus (Soil alga) protein is Small ribosomal subunit protein uS12c (rps12).